A 73-amino-acid polypeptide reads, in one-letter code: MRTIISLLLLSAMVFAVIEAISLEEGLQLFEGERGCVGENQQCADWAGLHCCSGYYCTCRYFPKCICRKDSGK.

The first 20 residues, methionine 1–alanine 20, serve as a signal peptide directing secretion. A propeptide spanning residues isoleucine 21–arginine 34 is cleaved from the precursor. 4 cysteine pairs are disulfide-bonded: cysteine 36–cysteine 52, cysteine 43–cysteine 57, cysteine 51–cysteine 67, and cysteine 59–cysteine 65. Serine 71 is modified (serine amide).

It belongs to the neurotoxin 07 (Beta/delta-agtx) family. 03 (aga-4) subfamily. Aga sub-subfamily. Expressed by the venom gland.

It localises to the secreted. Functionally, insecticidal neurotoxin that modulates the insect Nav channel (DmNaV1/tipE (para/tipE)) in a unique manner, with both the activation and inactivation processes being affected. The voltage dependence of activation is shifted toward more hyperpolarized potentials (analogous to site 4 toxins) and a non-inactivating persistent sodium current is induced (site 3-like action). Interestingly, both effects take place in a voltage-dependent manner, producing a bell-shaped curve between -80 and 0 mV. Compared to beta/delta-agatoxin-1 to -3, this toxin appears to affect the insect sodium channel only weakly. The sequence is that of U3-agatoxin-Ao1k from Agelena orientalis (Funnel-web spider).